A 335-amino-acid polypeptide reads, in one-letter code: Glucokinase (335 aa).

Residue 11-16 coordinates ATP; sequence ADIGGT.

This sequence belongs to the bacterial glucokinase family.

The protein localises to the cytoplasm. It carries out the reaction D-glucose + ATP = D-glucose 6-phosphate + ADP + H(+). This is Glucokinase from Xanthomonas campestris pv. campestris (strain 8004).